The primary structure comprises 109 residues: RNA-binding protein Hfq (109 aa).

In terms of domain architecture, Sm spans 9-68 (DPFLNALRKEKVSVSVYLVNGIKLQGQVEAFDQFCIVLRNTVNQMVYKHAISTIVPAKSV). Positions 77–109 (PYHQNSNDEQDENVDDIHSDDLEIQENEGNIHE) are disordered.

This sequence belongs to the Hfq family. In terms of assembly, homohexamer.

In terms of biological role, RNA chaperone that binds small regulatory RNA (sRNAs) and mRNAs to facilitate mRNA translational regulation in response to envelope stress, environmental stress and changes in metabolite concentrations. Also binds with high specificity to tRNAs. This Francisella tularensis subsp. tularensis (strain FSC 198) protein is RNA-binding protein Hfq.